Consider the following 553-residue polypeptide: Dihydroxy-acid dehydratase (553 aa).

Residue aspartate 78 coordinates Mg(2+). Cysteine 119 provides a ligand contact to [2Fe-2S] cluster. Residues aspartate 120 and lysine 121 each coordinate Mg(2+). N6-carboxylysine is present on lysine 121. Cysteine 191 contributes to the [2Fe-2S] cluster binding site. Position 444 (glutamate 444) interacts with Mg(2+). Serine 470 functions as the Proton acceptor in the catalytic mechanism.

The protein belongs to the IlvD/Edd family. As to quaternary structure, homodimer. Requires [2Fe-2S] cluster as cofactor. The cofactor is Mg(2+).

The catalysed reaction is (2R)-2,3-dihydroxy-3-methylbutanoate = 3-methyl-2-oxobutanoate + H2O. It carries out the reaction (2R,3R)-2,3-dihydroxy-3-methylpentanoate = (S)-3-methyl-2-oxopentanoate + H2O. It participates in amino-acid biosynthesis; L-isoleucine biosynthesis; L-isoleucine from 2-oxobutanoate: step 3/4. The protein operates within amino-acid biosynthesis; L-valine biosynthesis; L-valine from pyruvate: step 3/4. In terms of biological role, functions in the biosynthesis of branched-chain amino acids. Catalyzes the dehydration of (2R,3R)-2,3-dihydroxy-3-methylpentanoate (2,3-dihydroxy-3-methylvalerate) into 2-oxo-3-methylpentanoate (2-oxo-3-methylvalerate) and of (2R)-2,3-dihydroxy-3-methylbutanoate (2,3-dihydroxyisovalerate) into 2-oxo-3-methylbutanoate (2-oxoisovalerate), the penultimate precursor to L-isoleucine and L-valine, respectively. This Methanosarcina barkeri (strain Fusaro / DSM 804) protein is Dihydroxy-acid dehydratase.